A 376-amino-acid chain; its full sequence is DNA repair protein RAD51 homolog 3 (376 aa).

Residues 1–126 (MRGKTFRFEM…LMKTTEICGA (126 aa)) form a required for Holliday junction resolution activity region. Ser20 carries the post-translational modification Phosphoserine. Positions 79–136 (SESHKKCTALELLEQEHTQGFIITFCSALDDILGGGVPLMKTTEICGAPGVGKTQLCM) are interaction with RAD51B, RAD51D and XRCC3. 125-132 (GAPGVGKT) is a binding site for ATP. Positions 366 to 370 (RKRSR) match the Nuclear localization signal motif.

It belongs to the RecA family. RAD51 subfamily. In terms of assembly, part of the RAD51 paralog protein complexes BCDX2 and CX3; the complexes have a ring-like structure arranged into a flat disc around a central channel. The BCDX2 complex consits of RAD51B, RAD51C, RAD51D and XRCC2; the CX3 complex consists of RAD51C and XRCC3. The BCDX2 subcomplex RAD51B:RAD51C interacts with RAD51. Interacts with SWSAP1; involved in homologous recombination repair. Interacts directly with PALB2 which may serve as a scaffold for a HR complex containing PALB2, BRCA2, RAD51C, RAD51 and XRCC3. Interacts with HELQ. Interacts with DNA damage up-regulated protein DDUP. In terms of tissue distribution, expressed in a variety of tissues, with highest expression in testis, heart muscle, spleen and prostate.

Its subcellular location is the nucleus. The protein resides in the cytoplasm. It is found in the perinuclear region. It localises to the mitochondrion. Its function is as follows. Essential for the homologous recombination (HR) pathway of DNA repair. Involved in the homologous recombination repair (HRR) pathway of double-stranded DNA breaks arising during DNA replication or induced by DNA-damaging agents. Part of the RAD51 paralog protein complexes BCDX2 and CX3 which act at different stages of the BRCA1-BRCA2-dependent HR pathway. Upon DNA damage, BCDX2 seems to act downstream of BRCA2 recruitment and upstream of RAD51 recruitment; CX3 seems to act downstream of RAD51 recruitment; both complexes bind predominantly to the intersection of the four duplex arms of the Holliday junction (HJ) and to junction of replication forks. The BCDX2 complex was originally reported to bind single-stranded DNA, single-stranded gaps in duplex DNA and specifically to nicks in duplex DNA. The BCDX2 subcomplex RAD51B:RAD51C exhibits single-stranded DNA-dependent ATPase activity suggesting an involvement in early stages of the HR pathway. Involved in RAD51 foci formation in response to DNA damage suggesting an involvement in early stages of HR probably in the invasion step. Has an early function in DNA repair in facilitating phosphorylation of the checkpoint kinase CHEK2 and thereby transduction of the damage signal, leading to cell cycle arrest and HR activation. Participates in branch migration and HJ resolution and thus is important for processing HR intermediates late in the DNA repair process; the function may be linked to the CX3 complex. Part of a PALB2-scaffolded HR complex containing BRCA2 and which is thought to play a role in DNA repair by HR. Protects RAD51 from ubiquitin-mediated degradation that is enhanced following DNA damage. Plays a role in regulating mitochondrial DNA copy number under conditions of oxidative stress in the presence of RAD51 and XRCC3. Contributes to DNA cross-link resistance, sister chromatid cohesion and genomic stability. Involved in maintaining centrosome number in mitosis. This is DNA repair protein RAD51 homolog 3 (RAD51C) from Homo sapiens (Human).